Here is a 154-residue protein sequence, read N- to C-terminus: Superoxide dismutase [Cu-Zn] (154 aa).

The Cu cation site is built by His47, His49, and His64. Cys58 and Cys147 are joined by a disulfide. 4 residues coordinate Zn(2+): His64, His72, His81, and Asp84. A Cu cation-binding site is contributed by His121. The segment covering 125–136 (DDLGKGGNEESL) has biased composition (basic and acidic residues). Positions 125-144 (DDLGKGGNEESLKTGNAGPR) are disordered. Position 144 (Arg144) interacts with substrate.

Belongs to the Cu-Zn superoxide dismutase family. As to quaternary structure, homodimer. Cu cation is required as a cofactor. The cofactor is Zn(2+).

It is found in the cytoplasm. The enzyme catalyses 2 superoxide + 2 H(+) = H2O2 + O2. In terms of biological role, destroys radicals which are normally produced within the cells and which are toxic to biological systems. In Cordyceps tenuipes (Entomopathogenic fungus), this protein is Superoxide dismutase [Cu-Zn] (SOD1).